The chain runs to 583 residues: uncharacterized protein (583 aa).

Residues 1–38 (MGQGESIPSRQIQRDASMQAVSSESENINDSDRQNSGF) show a composition bias toward polar residues. Disordered regions lie at residues 1-39 (MGQG…SGFS), 53-124 (GLRR…AIPQ), 156-197 (TQNN…TAIG), and 362-452 (NSGS…QTDH). A compositionally biased stretch (basic and acidic residues) spans 70–80 (GNRDRTTERSA). The span at 88–102 (SLLNRNSPSLRSLSP) shows a compositional bias: low complexity. Polar residues-rich tracts occupy residues 156 to 165 (TQNNQSTLAS), 172 to 191 (VSSS…NLES), 384 to 408 (LISS…NENV), and 420 to 452 (ASTA…QTDH). Residues 525–568 (CLVCLSNFELNDECRRLKQCNHFFHRECIDQWLTSSQNSCPLCR) form an RING-type zinc finger. Ser580 is modified (phosphoserine).

It is found in the membrane. This is an uncharacterized protein from Schizosaccharomyces pombe (strain 972 / ATCC 24843) (Fission yeast).